Consider the following 408-residue polypeptide: E3 ubiquitin-protein ligase At1g12760 (408 aa).

The segment at 1–52 (MSTETTTGNSSLIPASSSSSSSDAIDPAPLLFNGDDNEGNNGGGGGERRSVR) is disordered. The span at 10 to 34 (SSLIPASSSSSSSDAIDPAPLLFNG) shows a compositional bias: low complexity. Helical transmembrane passes span 100 to 120 (VVVL…AILV) and 133 to 153 (VWLL…CVEY). Residues 160 to 195 (RTNRTTTTTPPRSRSSSSSSSSSSLEEEALGSRRNS) form a disordered region. The segment covering 163–183 (RTTTTTPPRSRSSSSSSSSSS) has biased composition (low complexity). 3 consecutive transmembrane segments (helical) span residues 219 to 239 (ANTM…SAGG), 254 to 274 (IVFL…ACVI), and 275 to 295 (GIAV…VADQ). The RING-type; atypical zinc-finger motif lies at 353 to 394 (CCICLSAYEDGTELRELPCGHHFHCSCVDKWLYINATCPLCK).

It is found in the membrane. The enzyme catalyses S-ubiquitinyl-[E2 ubiquitin-conjugating enzyme]-L-cysteine + [acceptor protein]-L-lysine = [E2 ubiquitin-conjugating enzyme]-L-cysteine + N(6)-ubiquitinyl-[acceptor protein]-L-lysine.. It participates in protein modification; protein ubiquitination. Functionally, mediates E2-dependent protein ubiquitination in vitro. This Arabidopsis thaliana (Mouse-ear cress) protein is E3 ubiquitin-protein ligase At1g12760.